We begin with the raw amino-acid sequence, 240 residues long: Triosephosphate isomerase (240 aa).

6–8 (NLK) contributes to the substrate binding site. His-88 acts as the Electrophile in catalysis. The active-site Proton acceptor is Glu-157. Substrate-binding residues include Gly-163 and Ser-193.

Belongs to the triosephosphate isomerase family. In terms of assembly, homodimer.

Its subcellular location is the cytoplasm. The enzyme catalyses D-glyceraldehyde 3-phosphate = dihydroxyacetone phosphate. It participates in carbohydrate biosynthesis; gluconeogenesis. It functions in the pathway carbohydrate degradation; glycolysis; D-glyceraldehyde 3-phosphate from glycerone phosphate: step 1/1. Functionally, involved in the gluconeogenesis. Catalyzes stereospecifically the conversion of dihydroxyacetone phosphate (DHAP) to D-glyceraldehyde-3-phosphate (G3P). The chain is Triosephosphate isomerase from Sulfurimonas denitrificans (strain ATCC 33889 / DSM 1251) (Thiomicrospira denitrificans (strain ATCC 33889 / DSM 1251)).